The primary structure comprises 114 residues: Biofilm growth-associated repressor (114 aa).

The HTH arsR-type domain maps to 17–111 (DMEKRANEVA…ALYTIFCAQE (95 aa)). Positions 51-74 (VGELEQQIGIGQPTLSQQLGVLRE) form a DNA-binding region, H-T-H motif.

In terms of biological role, represses an operon that comprises itself, XF_0764, XF_0765, XF_0766 and blh. Binds to a palindromic AT-rich sequence spanning the -10 region of the blh promoter and blocks transcription of the operon. In Xylella fastidiosa (strain 9a5c), this protein is Biofilm growth-associated repressor (bigR).